The primary structure comprises 655 residues: Bifunctional lysine-specific demethylase and histidyl-hydroxylase NO66 (655 aa).

The segment covering 1-16 (MEKVTNSAAAKPQGNN) has biased composition (polar residues). Disordered stretches follow at residues 1 to 48 (MEKV…LSDM) and 67 to 122 (EDTD…QGAS). The span at 76 to 86 (STSSKEAAAAK) shows a compositional bias: low complexity. Over residues 87–96 (TADHERRLQA) the composition is skewed to basic and acidic residues. Serine 131 carries the post-translational modification Phosphoserine. Residue threonine 137 is modified to Phosphothreonine. Residue serine 138 is modified to Phosphoserine. The interval 185–210 (KAPEEGNNNNDEKEMSTETSEPHKTD) is disordered. Basic and acidic residues predominate over residues 194–210 (NDEKEMSTETSEPHKTD). Residues 307–452 (CSIRLLHASA…NLLETLMPMV (146 aa)) form the JmjC domain. Fe cation-binding residues include histidine 353, aspartate 355, and histidine 418.

Belongs to the ROX family. NO66 subfamily. Fe(2+) serves as cofactor.

Its subcellular location is the nucleus. The catalysed reaction is N(6),N(6)-dimethyl-L-lysyl(36)-[histone H3] + 2 2-oxoglutarate + 2 O2 = L-lysyl(36)-[histone H3] + 2 formaldehyde + 2 succinate + 2 CO2. Its function is as follows. Oxygenase that can act as both a histone lysine demethylase and a ribosomal histidine hydroxylase. Specifically demethylates 'Lys-4' (H3K4me) and 'Lys-36' (H3K36me) of histone H3, thereby playing a central role in histone code. This chain is Bifunctional lysine-specific demethylase and histidyl-hydroxylase NO66, found in Drosophila sechellia (Fruit fly).